Here is a 271-residue protein sequence, read N- to C-terminus: Phosphate import ATP-binding protein PstB (271 aa).

The 243-residue stretch at 24 to 266 folds into the ABC transporter domain; it reads MIGNDVSVYY…PDDQRTQDYI (243 aa). Residue 56-63 coordinates ATP; the sequence is GPSGCGKS.

Belongs to the ABC transporter superfamily. Phosphate importer (TC 3.A.1.7) family. In terms of assembly, the complex is composed of two ATP-binding proteins (PstB), two transmembrane proteins (PstC and PstA) and a solute-binding protein (PstS).

It localises to the cell inner membrane. It catalyses the reaction phosphate(out) + ATP + H2O = ADP + 2 phosphate(in) + H(+). In terms of biological role, part of the ABC transporter complex PstSACB involved in phosphate import. Responsible for energy coupling to the transport system. In Rhizobium meliloti (strain 1021) (Ensifer meliloti), this protein is Phosphate import ATP-binding protein PstB.